The primary structure comprises 295 residues: 33 kDa chaperonin (295 aa).

2 disulfide bridges follow: cysteine 238-cysteine 240 and cysteine 271-cysteine 274.

Belongs to the HSP33 family. In terms of processing, under oxidizing conditions two disulfide bonds are formed involving the reactive cysteines. Under reducing conditions zinc is bound to the reactive cysteines and the protein is inactive.

It is found in the cytoplasm. Its function is as follows. Redox regulated molecular chaperone. Protects both thermally unfolding and oxidatively damaged proteins from irreversible aggregation. Plays an important role in the bacterial defense system toward oxidative stress. In Clostridium botulinum (strain Alaska E43 / Type E3), this protein is 33 kDa chaperonin.